We begin with the raw amino-acid sequence, 514 residues long: Mitochondrial-processing peptidase subunit alpha (514 aa).

A mitochondrion-targeting transit peptide spans 1-55 (MLLRKSIPYIKICRDISASVRNNKEIAQKLPLSVPLPMENNSKSIEKGCPPMGRN).

It belongs to the peptidase M16 family. As to quaternary structure, heterodimer of mppa-1 (alpha) and mppb-1 (beta) subunits, forming the mitochondrial processing protease (MPP) in which mppa-1 is involved in substrate recognition and binding and mppb-1 is the catalytic subunit.

It is found in the mitochondrion matrix. Its function is as follows. Substrate recognition and binding subunit of the essential mitochondrial processing protease (MPP), which cleaves the mitochondrial sequence off newly imported precursors proteins. This Caenorhabditis elegans protein is Mitochondrial-processing peptidase subunit alpha.